Consider the following 437-residue polypeptide: Major royal jelly protein 6 (437 aa).

Positions 1–20 (MTNWLLLIVCLSIACQDVTS) are cleaved as a signal peptide. N-linked (GlcNAc...) asparagine glycosylation is found at asparagine 78, asparagine 164, asparagine 181, asparagine 201, and asparagine 324.

The protein belongs to the major royal jelly protein family. Found in and secreted from the hypopharyngeal glands of the worker honey bee (at protein level); expression peaks at 20 days post eclosion. Expressed in the spermatheca of adult queen bees (at protein level); Expression levels are higher in mated queens than in virgin queens. Expressed at low level in the brains of adult worker bees. Protein abundance does not seem to correlate with transcript abundance.

Its subcellular location is the secreted. In terms of biological role, component of royal jelly, a substance produced in the hypopharyngeal gland containing proteins, free amino acids, fatty acids, sugars and other nutrients, which is fed to developing larvae by worker nurse bees. All larvae are fed some royal jelly (also known as worker jelly) early in their development but it forms the principal source of nutrition for larvae destined to become queen bees. Produced in the spermatheca of adult queen bees, along with other major royal jelly proteins, where it may act as a nutrient supply for sperm stored by mated queens, or be involved in energy metabolism. This Apis mellifera (Honeybee) protein is Major royal jelly protein 6.